The chain runs to 466 residues: Glutamate decarboxylase (466 aa).

Lys277 carries the post-translational modification N6-(pyridoxal phosphate)lysine.

It belongs to the group II decarboxylase family. The cofactor is pyridoxal 5'-phosphate.

The enzyme catalyses L-glutamate + H(+) = 4-aminobutanoate + CO2. Converts internalized glutamate to GABA and increases the internal pH. Involved in glutamate-dependent acid resistance. In Lactococcus lactis subsp. cremoris (strain MG1363), this protein is Glutamate decarboxylase (gadB).